Consider the following 430-residue polypeptide: Glutamate-1-semialdehyde 2,1-aminomutase (430 aa).

Position 267 is an N6-(pyridoxal phosphate)lysine (Lys-267).

Belongs to the class-III pyridoxal-phosphate-dependent aminotransferase family. HemL subfamily. In terms of assembly, homodimer. Pyridoxal 5'-phosphate serves as cofactor.

It localises to the cytoplasm. The enzyme catalyses (S)-4-amino-5-oxopentanoate = 5-aminolevulinate. The protein operates within porphyrin-containing compound metabolism; protoporphyrin-IX biosynthesis; 5-aminolevulinate from L-glutamyl-tRNA(Glu): step 2/2. The chain is Glutamate-1-semialdehyde 2,1-aminomutase from Sulfurovum sp. (strain NBC37-1).